Reading from the N-terminus, the 542-residue chain is Protein lin-9 homolog (542 aa).

Residue Ala-2 is modified to N-acetylalanine. Lys-21 is covalently cross-linked (Glycyl lysine isopeptide (Lys-Gly) (interchain with G-Cter in SUMO2)). Phosphoserine is present on residues Ser-65 and Ser-95. Phosphothreonine occurs at positions 96 and 304. Ser-309 and Ser-321 each carry phosphoserine.

This sequence belongs to the lin-9 family. In terms of assembly, component of the DREAM complex (also named LINC complex) at least composed of E2F4, E2F5, LIN9, LIN37, LIN52, LIN54, MYBL1, MYBL2, RBL1, RBL2, RBBP4, TFDP1 and TFDP2. The complex exists in quiescent cells where it represses cell cycle-dependent genes. It dissociates in S phase when LIN9, LIN37, LIN52 and LIN54 form a subcomplex that binds to MYBL2. Interacts with RB1.

It localises to the nucleus. It is found in the nucleoplasm. Its function is as follows. Acts as a tumor suppressor. Inhibits DNA synthesis. Its ability to inhibit oncogenic transformation is mediated through its association with RB1. Plays a role in the expression of genes required for the G1/S transition. In Mus musculus (Mouse), this protein is Protein lin-9 homolog (Lin9).